The primary structure comprises 283 residues: Bifunctional protein FolD (283 aa).

NADP(+) is bound by residues 163 to 165 (GRS), Ser-188, and Ile-229.

The protein belongs to the tetrahydrofolate dehydrogenase/cyclohydrolase family. In terms of assembly, homodimer.

It carries out the reaction (6R)-5,10-methylene-5,6,7,8-tetrahydrofolate + NADP(+) = (6R)-5,10-methenyltetrahydrofolate + NADPH. The enzyme catalyses (6R)-5,10-methenyltetrahydrofolate + H2O = (6R)-10-formyltetrahydrofolate + H(+). The protein operates within one-carbon metabolism; tetrahydrofolate interconversion. Its function is as follows. Catalyzes the oxidation of 5,10-methylenetetrahydrofolate to 5,10-methenyltetrahydrofolate and then the hydrolysis of 5,10-methenyltetrahydrofolate to 10-formyltetrahydrofolate. In Campylobacter concisus (strain 13826), this protein is Bifunctional protein FolD.